The chain runs to 2448 residues: Cysteine repeat modular protein 1 (2448 aa).

Residues 9–29 traverse the membrane as a helical segment; that stretch reads TSTNLLNIFALYFSAICFIYC. 9 N-linked (GlcNAc...) asparagine glycosylation sites follow: N48, N89, N248, N284, N461, N503, N542, N598, and N619. 4 FU repeats span residues 431–481, 485–530, 535–566, and 567–611; these read KNTC…GYYF, FMQC…GFYI, NFKCEKCNASCLSCTGPSFDQCLSCKSGFYLS, and SNTC…GQFA. 10 FU repeats span residues 645 to 694, 698 to 727, 728 to 772, 775 to 813, 819 to 868, 904 to 947, 950 to 983, 984 to 1027, 1063 to 1109, and 1113 to 1144; these read NNQC…GYFP, TSVCQACQGKCKTCTSSNTCSSCINGYYLQ, DSNC…GTFG, QNICQTCIDGCQTCYGPTLLECYSCEQGFFFQAFQITNN, KGMC…YYLS, GRVC…GFPD, QNVCVACHPTCVTCQGPLATDCLTCISGYYLNPA, NNIC…RTYP, QGAC…NQYV, and QNRCLPCFYSCSSCFGPNSNQCFSCQPNGFYL. 2 N-linked (GlcNAc...) asparagine glycosylation sites follow: N761 and N812. A glycan (N-linked (GlcNAc...) asparagine) is linked at N934. N-linked (GlcNAc...) asparagine glycosylation occurs at N1002. The N-linked (GlcNAc...) asparagine glycan is linked to N1146. One copy of the FU 15 repeat lies at 1147–1193; that stretch reads QTQCSICDISCLQCSGPGFDSCIQCAQGYYKLGDSVCVQSCPDGFFL. N1194 is a glycosylation site (N-linked (GlcNAc...) asparagine). FU repeat units follow at residues 1197–1232, 1234–1279, 1281–1332, 1346–1394, and 1402–1436; these read NNQCQSCNQVCFNCNGPQNSDCTSCAAGYYQSISNQ, GIIC…GYRS, KGVC…GTFQ, SYYC…GFIL, and NQYCKVCKINCVSCIQQFFYYQENCYSSCPVGTVQ. N-linked (GlcNAc...) asparagine glycosylation is found at N1296, N1328, and N1365. Residues N1506, N1601, N1628, and N1670 are each glycosylated (N-linked (GlcNAc...) asparagine). The region spanning 1739 to 1773 is the EGF-like domain; it reads SDISCSLNLCMNSGKCVPNSIFCSCPSAFTGPKCQ. Disulfide bonds link C1743–C1754, C1748–C1761, and C1763–C1772. Residues N1800, N1849, N1877, N1942, N2117, N2155, and N2179 are each glycosylated (N-linked (GlcNAc...) asparagine). 2 helical membrane-spanning segments follow: residues 2201 to 2221 and 2238 to 2258; these read LYIMIIISLGIGAAFLGYSAI and IYFLYYFPIISFLVGPTNQFV. N2260 carries an N-linked (GlcNAc...) asparagine glycan. Helical transmembrane passes span 2267–2287, 2296–2316, 2352–2372, and 2386–2406; these read SLTIIASHFAFSSIYVQILPF, ILTSIITVSSTSVCIYWTIGV, MIGLVLAVLALISISVFIGLC, and AVFLIDLIADAIVVFILIIVG.

The protein resides in the membrane. Its function is as follows. Required for mucocyst secretion. In Tetrahymena thermophila (strain SB210), this protein is Cysteine repeat modular protein 1.